A 252-amino-acid polypeptide reads, in one-letter code: 3-deoxy-manno-octulosonate cytidylyltransferase (252 aa).

Belongs to the KdsB family.

The protein localises to the cytoplasm. It catalyses the reaction 3-deoxy-alpha-D-manno-oct-2-ulosonate + CTP = CMP-3-deoxy-beta-D-manno-octulosonate + diphosphate. It participates in nucleotide-sugar biosynthesis; CMP-3-deoxy-D-manno-octulosonate biosynthesis; CMP-3-deoxy-D-manno-octulosonate from 3-deoxy-D-manno-octulosonate and CTP: step 1/1. Its pathway is bacterial outer membrane biogenesis; lipopolysaccharide biosynthesis. Activates KDO (a required 8-carbon sugar) for incorporation into bacterial lipopolysaccharide in Gram-negative bacteria. In Xylella fastidiosa (strain Temecula1 / ATCC 700964), this protein is 3-deoxy-manno-octulosonate cytidylyltransferase.